The following is a 594-amino-acid chain: Zinc finger protein 37 (594 aa).

The tract at residues 1-253 is disordered; sequence MATSEPAESD…KPEKAPGSGK (253 aa). Phosphothreonine is present on threonine 3. The region spanning 3–74 is the KRAB domain; it reads TSEPAESDAV…GKKASPSSLK (72 aa). Serine 9 carries the phosphoserine modification. Over residues 10-33 the composition is skewed to basic and acidic residues; it reads DAVRAKEWEQLEPVQRDVYKDTKL. The segment covering 34 to 46 has biased composition (polar residues); that stretch reads ENCSNPASMGNQD. Residues 89-111 are compositionally biased toward basic and acidic residues; it reads QQDDEHREEKQKSQSKLTKEVTL. The span at 145–158 shows a compositional bias: polar residues; sequence KSSSRGKNSNQNSD. Composition is skewed to basic and acidic residues over residues 159-172 and 181-234; these read SLKK…DHRK and VNKD…TGEK. C2H2-type zinc fingers lie at residues 255-277, 283-305, 311-324, 339-361, 367-389, 395-417, 423-445, 451-473, 479-501, 507-529, 535-557, and 563-585; these read YECN…QRTH, YECE…GHKH, YKCN…LRSH, YECK…VRTH, YECN…MRIH, FECN…QRTH, YKCD…MRTH, FECN…QRVH, YECV…QRTH, FECY…QRSH, and YECI…MKIH.

It belongs to the krueppel C2H2-type zinc-finger protein family. As to expression, expressed in testis and brain.

The protein localises to the nucleus. Functionally, may have a role in regulating spermiogenesis. This chain is Zinc finger protein 37 (Zfp37), found in Mus musculus (Mouse).